Reading from the N-terminus, the 340-residue chain is Phosphoribosylformylglycinamidine cyclo-ligase (340 aa).

This sequence belongs to the AIR synthase family.

The protein localises to the cytoplasm. It carries out the reaction 2-formamido-N(1)-(5-O-phospho-beta-D-ribosyl)acetamidine + ATP = 5-amino-1-(5-phospho-beta-D-ribosyl)imidazole + ADP + phosphate + H(+). It functions in the pathway purine metabolism; IMP biosynthesis via de novo pathway; 5-amino-1-(5-phospho-D-ribosyl)imidazole from N(2)-formyl-N(1)-(5-phospho-D-ribosyl)glycinamide: step 2/2. The polypeptide is Phosphoribosylformylglycinamidine cyclo-ligase (Streptococcus agalactiae serotype Ia (strain ATCC 27591 / A909 / CDC SS700)).